We begin with the raw amino-acid sequence, 926 residues long: Peripheral plasma membrane protein CASK (926 aa).

Residues 12–276 enclose the Protein kinase domain; it reads YELCEVIGKG…VYEALNHPWL (265 aa). ATP-binding positions include 18-26 and K41; that span reads IGKGPFSVV. Residue S51 is modified to Phosphoserine. The active site involves D141. 2 positions are modified to phosphoserine; by autocatalysis: S151 and S155. T182 is modified (phosphothreonine). A phosphoserine mark is found at K192 and S313. Residues 305 to 315 form a calmodulin-binding region; it reads KGAVLAAVSSH. L27 domains are found at residues 343–398 and 402–455; these read AERA…SPQI and PSDA…YSDE. The tract at residues 482–909 is required for interaction with NRXN1 (via C-terminal tail); it reads MENVTRVRLV…DETIRHLEEA (428 aa). One can recognise a PDZ domain in the interval 489–564; it reads RLVQFQKNTD…MLREMRGSIT (76 aa). Phosphoserine occurs at positions 571 and 577. A disordered region spans residues 574-610; the sequence is QSSSCERDSPSTSRQSPANGHSSTNNSVSDLPSTTQP. Residues 612-682 enclose the SH3 domain; sequence GRQIYVRAQF…PSPELQEWRV (71 aa). The Guanylate kinase-like domain occupies 739–911; it reads RKTLVLLGAH…TIRHLEEAVE (173 aa).

In the N-terminal section; belongs to the protein kinase superfamily. CAMK Ser/Thr protein kinase family. CaMK subfamily. This sequence belongs to the MAGUK family. CASK and LIN7 form two mutually exclusive tripartite complexes with APBA1 or CASKIN1. Component of the brain-specific heterotrimeric complex (LIN-10-LIN-2-LIN-7 complex) composed of at least APBA1, CASK, and LIN7, which associates with the motor protein KIF17 to transport vesicles along microtubules. Forms a heterotrimeric complex with DLG1 and LIN7B via their L27 domains. Identified in a complex with ACTN4, IQGAP1, MAGI2, NPHS1, SPTAN1 and SPTBN1. Part of a complex containing CASK, TBR1 and TSPYL2. Interacts with WHRN. Interacts (via the PDZ, SH3 and guanylate kinase-like domains) with NRXN1 (via C-terminus). Interacts with CASKIN1, APBA1, LIN7(A/B/C) and L27 domain of DLG1 and isoform 2 of DLG4. Interacts with FCHSD2. Interacts with KIRREL3. Interacts with TBR1. Interacts with TSPYL2. Requires Unlike other protein kinases, does not require a divalent cation such as magnesium for catalytic activity. as cofactor. As to expression, ubiquitous. Expression is significantly greater in brain relative to kidney, lung, and liver and in fetal brain and kidney relative to lung and liver.

It localises to the nucleus. Its subcellular location is the cytoplasm. The protein resides in the cell membrane. The enzyme catalyses L-seryl-[protein] + ATP = O-phospho-L-seryl-[protein] + ADP + H(+). It catalyses the reaction L-threonyl-[protein] + ATP = O-phospho-L-threonyl-[protein] + ADP + H(+). Differs from archetypal CaMK members in that the kinase domain exhibits a constitutively active conformation and the autoinhibitory region does not engage in direct contact with the ATP-binding cleft, although it still binds Ca(2+)/CAM. Its function is as follows. Multidomain scaffolding Mg(2+)-independent protein kinase that catalyzes the phosphotransfer from ATP to proteins such as NRXN1, and plays a role in synaptic transmembrane protein anchoring and ion channel trafficking. Contributes to neural development and regulation of gene expression via interaction with the transcription factor TBR1. Binds to cell-surface proteins, including amyloid precursor protein, neurexins and syndecans. May mediate a link between the extracellular matrix and the actin cytoskeleton via its interaction with syndecan and with the actin/spectrin-binding protein 4.1. Component of the LIN-10-LIN-2-LIN-7 complex, which associates with the motor protein KIF17 to transport vesicles containing N-methyl-D-aspartate (NMDA) receptor subunit NR2B along microtubules. This is Peripheral plasma membrane protein CASK from Homo sapiens (Human).